The chain runs to 217 residues: MEQNEREKKGAGAPNSAKAIVEALLFAAGDEGLSLSQIAAVLEVSELEAKAVIEELQQDCRREERGIQLVELGGVFLLATKKEHAPYLKKLVEAPGASPLSQAALETLAIIAYRQPITRAEIEEIRGVKSDKPLQTLMARALIKEVGRAEGTGRPILYGTTPEFLDYFGLKTLEELPPLPEWADDGESEREADLFFEKLAENLSDGQPEYGKLKKNG.

This sequence belongs to the ScpB family. Homodimer. Homodimerization may be required to stabilize the binding of ScpA to the Smc head domains. Component of a cohesin-like complex composed of ScpA, ScpB and the Smc homodimer, in which ScpA and ScpB bind to the head domain of Smc. The presence of the three proteins is required for the association of the complex with DNA.

It is found in the cytoplasm. Functionally, participates in chromosomal partition during cell division. May act via the formation of a condensin-like complex containing Smc and ScpA that pull DNA away from mid-cell into both cell halves. In Geobacillus kaustophilus (strain HTA426), this protein is Segregation and condensation protein B.